The sequence spans 120 residues: NAD(P)H-quinone oxidoreductase subunit 3 (120 aa).

The next 3 helical transmembrane spans lie at Phe10–Ile30, Met64–Val84, and Leu89–Ala109.

This sequence belongs to the complex I subunit 3 family. NDH-1 can be composed of about 15 different subunits; different subcomplexes with different compositions have been identified which probably have different functions.

It is found in the cellular thylakoid membrane. It catalyses the reaction a plastoquinone + NADH + (n+1) H(+)(in) = a plastoquinol + NAD(+) + n H(+)(out). The enzyme catalyses a plastoquinone + NADPH + (n+1) H(+)(in) = a plastoquinol + NADP(+) + n H(+)(out). Functionally, NDH-1 shuttles electrons from an unknown electron donor, via FMN and iron-sulfur (Fe-S) centers, to quinones in the respiratory and/or the photosynthetic chain. The immediate electron acceptor for the enzyme in this species is believed to be plastoquinone. Couples the redox reaction to proton translocation, and thus conserves the redox energy in a proton gradient. Cyanobacterial NDH-1 also plays a role in inorganic carbon-concentration. This chain is NAD(P)H-quinone oxidoreductase subunit 3, found in Prochlorococcus marinus (strain MIT 9515).